A 187-amino-acid polypeptide reads, in one-letter code: Reactive Intermediate Deaminase A, chloroplastic (187 aa).

Residues 1-58 constitute a chloroplast transit peptide; the sequence is MTWSVFRSINTPTLDLSTALRSTRTPLVAAGVGCATFAGVSLFRMSSRSPPFASLSVS. Residue Arg-165 participates in substrate binding.

The protein belongs to the RutC family. In terms of tissue distribution, expressed in leaves, petiols, petals, carpels and shoot apex.

The protein localises to the plastid. It is found in the chloroplast. It catalyses the reaction 2-iminobutanoate + H2O = 2-oxobutanoate + NH4(+). It carries out the reaction 2-iminopropanoate + H2O = pyruvate + NH4(+). It functions in the pathway amino-acid biosynthesis; L-isoleucine biosynthesis; 2-oxobutanoate from L-threonine. Its function is as follows. Hydrolyzes the Ser-derived enamine/imine product of Thr dehydratase, protecting the plastidial branched-chain aminotransferase BCAT3 (AC Q9M401) from inactivation. Involved in Ile biosynthesis. The polypeptide is Reactive Intermediate Deaminase A, chloroplastic (Arabidopsis thaliana (Mouse-ear cress)).